The following is a 426-amino-acid chain: tRNA(Met) cytidine acetate ligase (426 aa).

ATP-binding positions include 7–20, glycine 101, asparagine 168, and arginine 193; that span reads VVEYNPFHNGHLFH.

This sequence belongs to the TmcAL family.

It localises to the cytoplasm. It catalyses the reaction cytidine(34) in elongator tRNA(Met) + acetate + ATP = N(4)-acetylcytidine(34) in elongator tRNA(Met) + AMP + diphosphate. Functionally, catalyzes the formation of N(4)-acetylcytidine (ac(4)C) at the wobble position of elongator tRNA(Met), using acetate and ATP as substrates. First activates an acetate ion to form acetyladenylate (Ac-AMP) and then transfers the acetyl group to tRNA to form ac(4)C34. This chain is tRNA(Met) cytidine acetate ligase, found in Kosmotoga olearia (strain ATCC BAA-1733 / DSM 21960 / TBF 19.5.1).